Reading from the N-terminus, the 130-residue chain is Large ribosomal subunit protein bL21 (130 aa).

Residues 110-130 (KTAAQPAADEAVAANEVDSEA) are disordered. A compositionally biased stretch (low complexity) spans 112–130 (AAQPAADEAVAANEVDSEA).

Belongs to the bacterial ribosomal protein bL21 family. In terms of assembly, part of the 50S ribosomal subunit. Contacts protein L20.

Functionally, this protein binds to 23S rRNA in the presence of protein L20. The polypeptide is Large ribosomal subunit protein bL21 (Cyanothece sp. (strain PCC 7425 / ATCC 29141)).